The sequence spans 318 residues: Mitochondrial thiamine pyrophosphate carrier (318 aa).

3 Solcar repeats span residues 13–106 (ISNV…LTEL), 116–202 (RDFS…LKRA), and 214–309 (NGNF…FCNF). A helical membrane pass occupies residues 19 to 39 (AVAGSVSGLVTRVLISPLDVI). Ser-51 is modified (phosphoserine). The next 4 membrane-spanning stretches (helical) occupy residues 87–107 (LLSIGYGAVQFLSFEALTELV), 122–142 (FLCGGLSACVATLAVHPVDVL), 173–193 (VFYKGLNPTLIAIFPYAGFQF), and 220–240 (LLCGSGAGVISKTLTYPLDLF). The Substrate recognition signature appears at 241–246 (KKRLQV). A helical transmembrane segment spans residues 293–313 (ALSTGLVFFWYELFCNFFHHM).

It belongs to the mitochondrial carrier (TC 2.A.29) family.

The protein localises to the mitochondrion membrane. The catalysed reaction is thiamine phosphate(out) + thiamine diphosphate(in) = thiamine phosphate(in) + thiamine diphosphate(out). In terms of biological role, mitochondrial transporter mediating uptake of thiamine diphosphate into mitochondria. It is not clear if the antiporter activity is affected by the membrane potential or by the proton electrochemical gradient. The polypeptide is Mitochondrial thiamine pyrophosphate carrier (SLC25A19) (Bos taurus (Bovine)).